The primary structure comprises 102 residues: Small ribosomal subunit protein uS10 (102 aa).

The protein belongs to the universal ribosomal protein uS10 family. Part of the 30S ribosomal subunit.

Functionally, involved in the binding of tRNA to the ribosomes. The sequence is that of Small ribosomal subunit protein uS10 from Clostridium acetobutylicum (strain ATCC 824 / DSM 792 / JCM 1419 / IAM 19013 / LMG 5710 / NBRC 13948 / NRRL B-527 / VKM B-1787 / 2291 / W).